Reading from the N-terminus, the 392-residue chain is NAD(P)H-quinone oxidoreductase subunit H (392 aa).

It belongs to the complex I 49 kDa subunit family. NDH-1 can be composed of about 15 different subunits; different subcomplexes with different compositions have been identified which probably have different functions.

It localises to the cellular thylakoid membrane. It catalyses the reaction a plastoquinone + NADH + (n+1) H(+)(in) = a plastoquinol + NAD(+) + n H(+)(out). It carries out the reaction a plastoquinone + NADPH + (n+1) H(+)(in) = a plastoquinol + NADP(+) + n H(+)(out). Functionally, NDH-1 shuttles electrons from an unknown electron donor, via FMN and iron-sulfur (Fe-S) centers, to quinones in the respiratory and/or the photosynthetic chain. The immediate electron acceptor for the enzyme in this species is believed to be plastoquinone. Couples the redox reaction to proton translocation, and thus conserves the redox energy in a proton gradient. Cyanobacterial NDH-1 also plays a role in inorganic carbon-concentration. The sequence is that of NAD(P)H-quinone oxidoreductase subunit H from Synechococcus sp. (strain JA-2-3B'a(2-13)) (Cyanobacteria bacterium Yellowstone B-Prime).